The sequence spans 329 residues: GTP 3',8-cyclase (329 aa).

The 227-residue stretch at 8-234 folds into the Radical SAM core domain; that stretch reads AFARKFYYLR…QIRQRSDGPA (227 aa). GTP is bound at residue arginine 17. The [4Fe-4S] cluster site is built by cysteine 24 and cysteine 28. Tyrosine 30 contributes to the S-adenosyl-L-methionine binding site. Residue cysteine 31 participates in [4Fe-4S] cluster binding. Residue arginine 68 coordinates GTP. Glycine 72 provides a ligand contact to S-adenosyl-L-methionine. Threonine 99 is a GTP binding site. Residue serine 123 participates in S-adenosyl-L-methionine binding. Residue lysine 160 coordinates GTP. Methionine 194 is a binding site for S-adenosyl-L-methionine. Positions 257 and 260 each coordinate [4Fe-4S] cluster. Residue 262-264 participates in GTP binding; sequence RLR. Cysteine 274 contributes to the [4Fe-4S] cluster binding site.

Belongs to the radical SAM superfamily. MoaA family. In terms of assembly, monomer and homodimer. It depends on [4Fe-4S] cluster as a cofactor.

It carries out the reaction GTP + AH2 + S-adenosyl-L-methionine = (8S)-3',8-cyclo-7,8-dihydroguanosine 5'-triphosphate + 5'-deoxyadenosine + L-methionine + A + H(+). It functions in the pathway cofactor biosynthesis; molybdopterin biosynthesis. In terms of biological role, catalyzes the cyclization of GTP to (8S)-3',8-cyclo-7,8-dihydroguanosine 5'-triphosphate. This is GTP 3',8-cyclase from Klebsiella pneumoniae subsp. pneumoniae (strain ATCC 700721 / MGH 78578).